Consider the following 494-residue polypeptide: Glycogen synthase (494 aa).

ADP-alpha-D-glucose is bound at residue lysine 24.

The protein belongs to the glycosyltransferase 1 family. Bacterial/plant glycogen synthase subfamily.

The enzyme catalyses [(1-&gt;4)-alpha-D-glucosyl](n) + ADP-alpha-D-glucose = [(1-&gt;4)-alpha-D-glucosyl](n+1) + ADP + H(+). It functions in the pathway glycan biosynthesis; glycogen biosynthesis. In terms of biological role, synthesizes alpha-1,4-glucan chains using ADP-glucose. The protein is Glycogen synthase of Aromatoleum aromaticum (strain DSM 19018 / LMG 30748 / EbN1) (Azoarcus sp. (strain EbN1)).